Here is a 723-residue protein sequence, read N- to C-terminus: FACT complex subunit Ssrp1 (723 aa).

S443 bears the Phosphoserine mark. Disordered regions lie at residues E459–L564 and A586–D723. Composition is skewed to acidic residues over residues E464–D478 and N486–D507. Positions K531 to R557 are enriched in basic residues. The segment at residues P555–K621 is a DNA-binding region (HMG box). Residues A586 to K621 show a composition bias toward basic and acidic residues. S628 carries the phosphoserine modification. Residues P644–G656 are compositionally biased toward polar residues. 2 positions are modified to phosphoserine: S664 and S668. The span at S664 to D676 shows a compositional bias: acidic residues. T669 is modified (phosphothreonine). Residues S670 and S671 each carry the phosphoserine modification. Positions N677 to A692 are enriched in basic and acidic residues. A compositionally biased stretch (acidic residues) spans E702 to D723.

Belongs to the SSRP1 family. Component of the FACT complex, a stable heterodimer of dre4/spt16 and Ssrp. Interacts with CHD1 and TRL/GAGA. Expressed at highest levels in nurse cells of the ovary.

Its subcellular location is the nucleus. It localises to the chromosome. It is found in the nucleolus. Component of the FACT complex, a general chromatin factor that acts to reorganize nucleosomes. The FACT complex is involved in multiple processes that require DNA as a template such as mRNA elongation, DNA replication and DNA repair. During transcription elongation the FACT complex acts as a histone chaperone that both destabilizes and restores nucleosomal structure. It facilitates the passage of RNA polymerase II and transcription by promoting the dissociation of one histone H2A-H2B dimer from the nucleosome, then subsequently promotes the reestablishment of the nucleosome following the passage of RNA polymerase II. Binds specifically to single-stranded DNA and RNA with highest affinity for nucleotides G and U. The FACT complex is required for expression of Hox genes. This chain is FACT complex subunit Ssrp1 (Ssrp), found in Drosophila melanogaster (Fruit fly).